We begin with the raw amino-acid sequence, 758 residues long: Probable adenosylcobalamin-dependent ribonucleoside-triphosphate reductase (758 aa).

Residues Cys-194 and Cys-459 are joined by a disulfide bond. The disordered stretch occupies residues Ile-233 to Gly-256. Catalysis depends on residues Cys-448 and Glu-450.

This sequence belongs to the class II ribonucleoside-triphosphate reductase family. As to quaternary structure, monomer. Requires adenosylcob(III)alamin as cofactor.

The enzyme catalyses a 2'-deoxyribonucleoside 5'-triphosphate + [thioredoxin]-disulfide + H2O = a ribonucleoside 5'-triphosphate + [thioredoxin]-dithiol. This Dictyostelium discoideum (Social amoeba) protein is Probable adenosylcobalamin-dependent ribonucleoside-triphosphate reductase (rtpR).